Here is a 722-residue protein sequence, read N- to C-terminus: Inactive serine protease PAMR1 (722 aa).

Residues 1-21 (MALLVWSSLVVASLHLLGTAA) form the signal peptide. The N-linked (GlcNAc...) asparagine glycan is linked to N98. Cystine bridges form between C130-C152, C179-C201, C241-C252, C246-C262, C264-C273, C282-C331, C317-C344, and C416-C444. In terms of domain architecture, CUB spans 130 to 238 (CGEVIQAARG…DGFYVTFEEV (109 aa)). An EGF-like domain is found at 237-274 (EVTGCSSTPCFHDGTCIADKTGSYRCACLAGYTGRHCE). 2 consecutive Sushi domains span residues 280–346 (KSCK…VCIK) and 393–446 (KPAL…SCIP). N318 carries N-linked (GlcNAc...) asparagine glycosylation. The region spanning 447-722 (ICGKLENFNI…FKEWLEKNMK (276 aa)) is the Peptidase S1 domain. The N-linked (GlcNAc...) asparagine glycan is linked to N455. C491 and C507 are joined by a disulfide. N616 carries N-linked (GlcNAc...) asparagine glycosylation. Disulfide bonds link C632–C651 and C663–C699.

The protein belongs to the peptidase S1 family.

It is found in the secreted. Functionally, may play a role in regeneration of skeletal muscle. The polypeptide is Inactive serine protease PAMR1 (pamr1) (Xenopus tropicalis (Western clawed frog)).